Here is a 176-residue protein sequence, read N- to C-terminus: Inner membrane-spanning protein YciB (176 aa).

5 helical membrane passes run 24–44 (TATAVAIGATLVQIAWVAFRH), 49–69 (PMLWVSLGVVTVFGGATLVLH), 76–96 (WKPTVLYWAFSVVLVVSALGF), 121–141 (YVWAVFFVLLGILNLFVAYNF), and 149–169 (FKLFGATGCLVVFIVGQSLWL).

The protein belongs to the YciB family.

The protein localises to the cell inner membrane. Functionally, plays a role in cell envelope biogenesis, maintenance of cell envelope integrity and membrane homeostasis. This Paraburkholderia phymatum (strain DSM 17167 / CIP 108236 / LMG 21445 / STM815) (Burkholderia phymatum) protein is Inner membrane-spanning protein YciB.